The chain runs to 232 residues: tRNA1(Val) (adenine(37)-N6)-methyltransferase (232 aa).

Belongs to the methyltransferase superfamily. tRNA (adenine-N(6)-)-methyltransferase family.

Its subcellular location is the cytoplasm. It catalyses the reaction adenosine(37) in tRNA1(Val) + S-adenosyl-L-methionine = N(6)-methyladenosine(37) in tRNA1(Val) + S-adenosyl-L-homocysteine + H(+). Functionally, specifically methylates the adenine in position 37 of tRNA(1)(Val) (anticodon cmo5UAC). This Haemophilus influenzae (strain 86-028NP) protein is tRNA1(Val) (adenine(37)-N6)-methyltransferase.